We begin with the raw amino-acid sequence, 243 residues long: Cell division protein ZipA (243 aa).

The Periplasmic portion of the chain corresponds to 1–4 (MSDV). The chain crosses the membrane as a helical span at residues 5-25 (TLLRIGIAIVGILFVAAVFFF). The Cytoplasmic segment spans residues 26-243 (STPKTSAHRV…VPPLIKNSRW (218 aa)). The tract at residues 32 to 89 (AHRVRTKKEEPPRERREPMLSTEADNSPPQGVDEVPASVSQQQVNPEANKPGEVQLGK) is disordered. A compositionally biased stretch (basic and acidic residues) spans 38–49 (KKEEPPRERREP).

Belongs to the ZipA family. As to quaternary structure, interacts with FtsZ via their C-terminal domains.

It localises to the cell inner membrane. Essential cell division protein that stabilizes the FtsZ protofilaments by cross-linking them and that serves as a cytoplasmic membrane anchor for the Z ring. Also required for the recruitment to the septal ring of downstream cell division proteins. The sequence is that of Cell division protein ZipA from Xylella fastidiosa (strain 9a5c).